Here is a 146-residue protein sequence, read N- to C-terminus: Large ribosomal subunit protein uL13 (146 aa).

It belongs to the universal ribosomal protein uL13 family. In terms of assembly, part of the 50S ribosomal subunit.

In terms of biological role, this protein is one of the early assembly proteins of the 50S ribosomal subunit, although it is not seen to bind rRNA by itself. It is important during the early stages of 50S assembly. This Mycoplasma genitalium (strain ATCC 33530 / DSM 19775 / NCTC 10195 / G37) (Mycoplasmoides genitalium) protein is Large ribosomal subunit protein uL13.